Here is a 421-residue protein sequence, read N- to C-terminus: D-amino acid dehydrogenase (421 aa).

3 to 17 (VIVLGSGVIGVASAY) serves as a coordination point for FAD.

It belongs to the DadA oxidoreductase family. Requires FAD as cofactor.

It catalyses the reaction a D-alpha-amino acid + A + H2O = a 2-oxocarboxylate + AH2 + NH4(+). The protein operates within amino-acid degradation; D-alanine degradation; NH(3) and pyruvate from D-alanine: step 1/1. Its function is as follows. Oxidative deamination of D-amino acids. The polypeptide is D-amino acid dehydrogenase (Acinetobacter baumannii (strain SDF)).